Reading from the N-terminus, the 298-residue chain is Ribosomal RNA small subunit methyltransferase H (298 aa).

Residues 35–37 (GGH), Asp-55, Phe-82, Asp-100, and Gln-107 contribute to the S-adenosyl-L-methionine site.

It belongs to the methyltransferase superfamily. RsmH family.

The protein localises to the cytoplasm. It carries out the reaction cytidine(1402) in 16S rRNA + S-adenosyl-L-methionine = N(4)-methylcytidine(1402) in 16S rRNA + S-adenosyl-L-homocysteine + H(+). Its function is as follows. Specifically methylates the N4 position of cytidine in position 1402 (C1402) of 16S rRNA. The polypeptide is Ribosomal RNA small subunit methyltransferase H (Chlamydia felis (strain Fe/C-56) (Chlamydophila felis)).